A 156-amino-acid polypeptide reads, in one-letter code: Proline dehydrogenase transcriptional activator (156 aa).

One can recognise an HTH asnC-type domain in the interval 10-71 (LDHFDLKILE…VLNPQKLGVD (62 aa)). Positions 29 to 48 (VLQLSKRVGLSKTPCQTRLK) form a DNA-binding region, H-T-H motif.

Its function is as follows. Transcriptional activator of the putA gene in response to proline. The chain is Proline dehydrogenase transcriptional activator (putR) from Rhizobium radiobacter (Agrobacterium tumefaciens).